The chain runs to 347 residues: GTPase Obg (347 aa).

One can recognise an Obg domain in the interval 1 to 158 (MFIDNVKLVL…LSVRLELKLI (158 aa)). The OBG-type G domain occupies 159 to 339 (ADVGLVGFPN…LKFMLLEEVK (181 aa)). GTP contacts are provided by residues 165 to 172 (GFPNVGKS), 190 to 194 (FTTLT), 212 to 215 (DIPG), 280 to 283 (SKSD), and 320 to 322 (SSL). The Mg(2+) site is built by S172 and T192.

It belongs to the TRAFAC class OBG-HflX-like GTPase superfamily. OBG GTPase family. In terms of assembly, monomer. Mg(2+) is required as a cofactor.

Its subcellular location is the cytoplasm. Functionally, an essential GTPase which binds GTP, GDP and possibly (p)ppGpp with moderate affinity, with high nucleotide exchange rates and a fairly low GTP hydrolysis rate. Plays a role in control of the cell cycle, stress response, ribosome biogenesis and in those bacteria that undergo differentiation, in morphogenesis control. This Campylobacter lari (strain RM2100 / D67 / ATCC BAA-1060) protein is GTPase Obg.